The sequence spans 275 residues: Large ribosomal subunit protein uL2 (275 aa).

Disordered regions lie at residues 28–59 (KPFAPLLDSQSTTAGRNNNGHITTRHKGGGHK) and 224–275 (AMNP…RHKR). Residues 35–49 (DSQSTTAGRNNNGHI) are compositionally biased toward polar residues. A compositionally biased stretch (basic residues) spans 50-59 (TTRHKGGGHK).

Belongs to the universal ribosomal protein uL2 family. As to quaternary structure, part of the 50S ribosomal subunit. Forms a bridge to the 30S subunit in the 70S ribosome.

One of the primary rRNA binding proteins. Required for association of the 30S and 50S subunits to form the 70S ribosome, for tRNA binding and peptide bond formation. It has been suggested to have peptidyltransferase activity; this is somewhat controversial. Makes several contacts with the 16S rRNA in the 70S ribosome. This Paraburkholderia xenovorans (strain LB400) protein is Large ribosomal subunit protein uL2.